Consider the following 154-residue polypeptide: NADPH-dependent 7-cyano-7-deazaguanine reductase (154 aa).

Over residues 1-13 the composition is skewed to polar residues; the sequence is MSVTDVSGLSQLG. The tract at residues 1-30 is disordered; it reads MSVTDVSGLSQLGTKVDTPESPEKAVLEKV. A compositionally biased stretch (basic and acidic residues) spans 17 to 27; the sequence is DTPESPEKAVL. The active-site Thioimide intermediate is cysteine 52. The active-site Proton donor is the aspartate 59. Substrate-binding positions include 74–76 and 93–94; these read VES and HE.

This sequence belongs to the GTP cyclohydrolase I family. QueF type 1 subfamily.

The protein resides in the cytoplasm. It carries out the reaction 7-aminomethyl-7-carbaguanine + 2 NADP(+) = 7-cyano-7-deazaguanine + 2 NADPH + 3 H(+). It participates in tRNA modification; tRNA-queuosine biosynthesis. Catalyzes the NADPH-dependent reduction of 7-cyano-7-deazaguanine (preQ0) to 7-aminomethyl-7-deazaguanine (preQ1). This chain is NADPH-dependent 7-cyano-7-deazaguanine reductase, found in Agrobacterium fabrum (strain C58 / ATCC 33970) (Agrobacterium tumefaciens (strain C58)).